The sequence spans 32 residues: Ovostatin (32 aa).

Residues 27-30 (CGEQ) constitute a cross-link (isoglutamyl cysteine thioester (Cys-Gln)).

This sequence belongs to the protease inhibitor I39 (alpha-2-macroglobulin) family. In terms of assembly, homotetramer, which consists of two pairs of disulfide-linked chains.

The protein resides in the secreted. Its function is as follows. Is able to inhibit all four classes of proteinases by a unique 'trapping' mechanism. This protein has a peptide stretch, called the 'bait region' which contains specific cleavage sites for different proteinases. When a proteinase cleaves the bait region, a conformational change is induced in the protein which traps the proteinase. The entrapped enzyme remains active against low molecular weight substrates (activity against high molecular weight substrates is greatly reduced). Following cleavage in the bait region a thioester bond is hydrolyzed and mediates the covalent binding of the protein to the proteinase. The sequence is that of Ovostatin from Anas platyrhynchos (Mallard).